The primary structure comprises 363 residues: Small ribosomal subunit biogenesis GTPase RsgA (363 aa).

Residues 112–268 (HQQVIAANID…LIDTPGMREL (157 aa)) form the CP-type G domain. Residues 157 to 160 (TKAD) and 210 to 218 (GSSGAGKST) contribute to the GTP site. The Zn(2+) site is built by Cys-291, Cys-296, His-298, and Cys-304. The tract at residues 340–363 (RVAQNNRGKGSGKRPASVDRPGRR) is disordered.

It belongs to the TRAFAC class YlqF/YawG GTPase family. RsgA subfamily. Monomer. Associates with 30S ribosomal subunit, binds 16S rRNA. It depends on Zn(2+) as a cofactor.

The protein resides in the cytoplasm. One of several proteins that assist in the late maturation steps of the functional core of the 30S ribosomal subunit. Helps release RbfA from mature subunits. May play a role in the assembly of ribosomal proteins into the subunit. Circularly permuted GTPase that catalyzes slow GTP hydrolysis, GTPase activity is stimulated by the 30S ribosomal subunit. The sequence is that of Small ribosomal subunit biogenesis GTPase RsgA from Xanthomonas campestris pv. campestris (strain 8004).